The primary structure comprises 76 residues: ATP synthase subunit 9, mitochondrial (76 aa).

Met-1 is modified (N-formylmethionine). The next 2 helical transmembrane spans lie at 14 to 34 (LASI…AALI) and 52 to 72 (ILGF…AFLL).

As to quaternary structure, F-type ATP synthases have 2 components, the catalytic core F(1) and the membrane-embedded component F(0), linked together by a central stalk and a peripheral stalk. The central stalk, also called rotor shaft, is often seen as part of F(1). The peripheral stalk is seen as part of F(0). F(0) contains the membrane channel next to the rotor. F-type ATP synthases form dimers but each monomer functions independently in ATP generation. The dimer consists of 17 different polypeptides: ATP1 (subunit alpha, 3 molecules per monomer, part of F(1)), ATP2 (subunit beta, 3 copies per monomer, part of F(1)), ATP3 (subunit gamma, part of the central stalk), ATP4 (subunit b, part of the peripheral stalk), ATP5/OSCP (subunit 5/OSCP, part of the peripheral stalk), ATP6 (subunit a, part of the peripheral stalk), ATP7 (subunit d, part of the peripheral stalk), ATP8 (subunit 8, part of the peripheral stalk), OLI1 (subunit c, part of the rotor, 10 molecules per monomer), ATP14 (subunit h, part of the peripheral stalk), ATP15 (subunit epsilon, part of the central stalk), ATP16 (subunit delta, part of the central stalk), ATP17 (subunit f, part of the peripheral stalk), ATP18 (subunit i/j, part of the peripheral stalk), ATP19 (subunit k, dimer-specific, at interface between monomers), ATP20 (subunit g, at interface between monomers), TIM11 (subunit e, at interface between monomers).

It localises to the mitochondrion inner membrane. Mitochondrial membrane ATP synthase (F(1)F(0) ATP synthase or Complex V) produces ATP from ADP in the presence of a proton gradient across the membrane which is generated by electron transport complexes of the respiratory chain. F-type ATP synthases consist of two structural domains, F(1) - containing the extramembraneous catalytic core, and F(0) - containing the membrane proton channel, linked together by a central stalk and a peripheral stalk. During catalysis, ATP synthesis in the catalytic domain of F(1) is coupled via a rotary mechanism of the central stalk subunits to proton translocation. Part of the complex F(0) domain. A homomeric c-ring of 10 OLI1/ATP9 subunits is part of the complex rotary element. The sequence is that of ATP synthase subunit 9, mitochondrial from Yarrowia lipolytica (strain CLIB 122 / E 150) (Yeast).